The following is a 63-amino-acid chain: MGSAKDKVAGKANELAGKAKKAAGDATDNNSLRAKGAAQEAKGGAQQAKGKLKDAVKGAVDKT.

Residues 1–63 (MGSAKDKVAG…DAVKGAVDKT (63 aa)) form a disordered region. The segment covering 34 to 49 (AKGAAQEAKGGAQQAK) has biased composition (low complexity). A compositionally biased stretch (basic and acidic residues) spans 51–63 (KLKDAVKGAVDKT).

The protein belongs to the UPF0337 (CsbD) family.

The sequence is that of UPF0337 protein RA1131 from Rhizobium meliloti (strain 1021) (Ensifer meliloti).